A 179-amino-acid polypeptide reads, in one-letter code: Apoptosis regulator Bcl-2 homolog (179 aa).

Residues 76 to 95 carry the BH1 motif; sequence ELFKDLINWGRICGFIVFSA. The BH2 signature appears at 126 to 141; that stretch reads PWMISHGGQEEFLAFS.

The protein belongs to the Bcl-2 family. In terms of assembly, interacts with host BECN1 (via BH3 homology domain); this interaction allows the virus to inhibit BECN1, and thus autophagy. Interacts with host BID. Interacts with host BAX.

Its subcellular location is the host mitochondrion. It localises to the host endoplasmic reticulum. Its function is as follows. Suppresses apoptosis in host cell to promote the viral replication. Has the ability to potentially bind to all the members of the proapoptotic Bcl-2 family. Inhibits autophagy by interacting with host Beclin 1 (BECN1). The protein is Apoptosis regulator Bcl-2 homolog of African swine fever virus (isolate Tick/South Africa/Pretoriuskop Pr4/1996) (ASFV).